A 382-amino-acid chain; its full sequence is Apolipoprotein A-IV (382 aa).

The N-terminal stretch at 1–20 (MFLKAVVLSLALVAVTGARA) is a signal peptide. Tandem repeats lie at residues 33–54 (DYFS…KSEL), 60–81 (TLFQ…KKLV), 82–103 (PFAT…EEIR), 115–136 (PHAT…QRLG), 137–158 (PFTG…RQLK), 159–180 (PYAE…ASVA), 181–202 (PYAD…GSLT), 203–224 (PYAE…RSLA), 225–246 (PYAQ…FQMK), 247–268 (KQAE…QKLV), 269–286 (PVAE…EGLQ), 287–308 (KSLL…LKVE), and 309–330 (PYGE…QKLG). The segment at 33 to 330 (DYFSQLGSNA…QVEDLRQKLG (298 aa)) is 13 X 22 AA approximate tandem repeats. The disordered stretch occupies residues 361 to 382 (EASQGQSQALPAQEKAQAPLEG).

This sequence belongs to the apolipoprotein A1/A4/E family. As to quaternary structure, homodimer. Secreted in plasma.

It is found in the secreted. May have a role in chylomicrons and VLDL secretion and catabolism. Required for efficient activation of lipoprotein lipase by ApoC-II; potent activator of LCAT. Apoa-IV is a major component of HDL and chylomicrons. The protein is Apolipoprotein A-IV (APOA4) of Sus scrofa (Pig).